Consider the following 136-residue polypeptide: MENKVTLSDLVRKNIPVILKGSKHPLTEKELLEELAKKIPELVKNGEYRNGVLRGVLNKLSTQPVDRLGISREGNRVKYYFITDKKTELQNVIRNLISEIKEKELLTVDYLNDSPETIDFIKDVSTHVKDLEGFTR.

This Bacillus subtilis (strain 168) protein is SPbeta prophage-derived uncharacterized protein YonI (yonI).